Here is a 488-residue protein sequence, read N- to C-terminus: MINRQLSRLLLCSILGSTTLISGCALVRKDSAPHQQLKPEQIKLADDIHLASSGWPQAQWWKQLNDPQLDALIQRTLSGSHTLAEAKLREEKAQSQADLLDAGSQLQVAALGMLNRQRVSANGFLSPYSMDAPALGMDGPYYTEATVGLFAGLDLDLWGVHRSAVAAAIGAHNAALAETAAVELSLATGVAQLYYSMQASYQMLDLLEQTHDVIDYAVKAHQSKVAHGLEAQVPFHGARAQILAVDKQIVAVKGQITETRESLRALIGAGASDMPEIRPVALPQVQTGIPATLSYELLARRPDLQAMRWYVQASLDQVDSARALFYPSFDIKAFFGLDSIHLHTLFKKTSRQFNFIPGLKLPLFDGGRLNANLEGTRAASNMMIERYNQSVLNAVRDVAVNGTRLQTLNDEREMQAERVEATRFTQRAAEAAYQRGLTSRLQATEARLPVLAEEMSLLMLDSRRVIQSIQLMKSLGGGYQAGPVVEKK.

The signal sequence occupies residues 1 to 23 (MINRQLSRLLLCSILGSTTLISG). Residue Cys-24 is the site of N-palmitoyl cysteine attachment. The S-diacylglycerol cysteine moiety is linked to residue Cys-24.

Belongs to the outer membrane factor (OMF) (TC 1.B.17) family. As to quaternary structure, could be part of a tripartite efflux system composed of MdtN, MdtO and MdtP.

It localises to the cell outer membrane. Functionally, could be involved in resistance to puromycin, acriflavine and tetraphenylarsonium chloride. The protein is Multidrug resistance outer membrane protein MdtP (mdtP) of Escherichia coli (strain K12).